A 699-amino-acid polypeptide reads, in one-letter code: UvrABC system protein B (699 aa).

Positions 35–188 constitute a Helicase ATP-binding domain; the sequence is ERINNGEKDV…DHLLRKFVSM (154 aa). ATP is bound at residue 48–55; it reads GATGTGKS. Residues 101 to 124 carry the Beta-hairpin motif; the sequence is YYDYYQPEAYVAQTDTFIEKDSSI. Residues 438–604 enclose the Helicase C-terminal domain; the sequence is QIDDLLGEIR…PLRKKIADIT (167 aa). In terms of domain architecture, UVR spans 654-689; it reads VGLIEQLTEQMHGAAAELQFEVAARIRDEVKELKRE.

The protein belongs to the UvrB family. In terms of assembly, forms a heterotetramer with UvrA during the search for lesions. Interacts with UvrC in an incision complex.

Its subcellular location is the cytoplasm. Its function is as follows. The UvrABC repair system catalyzes the recognition and processing of DNA lesions. A damage recognition complex composed of 2 UvrA and 2 UvrB subunits scans DNA for abnormalities. Upon binding of the UvrA(2)B(2) complex to a putative damaged site, the DNA wraps around one UvrB monomer. DNA wrap is dependent on ATP binding by UvrB and probably causes local melting of the DNA helix, facilitating insertion of UvrB beta-hairpin between the DNA strands. Then UvrB probes one DNA strand for the presence of a lesion. If a lesion is found the UvrA subunits dissociate and the UvrB-DNA preincision complex is formed. This complex is subsequently bound by UvrC and the second UvrB is released. If no lesion is found, the DNA wraps around the other UvrB subunit that will check the other stand for damage. The polypeptide is UvrABC system protein B (Paenarthrobacter aurescens (strain TC1)).